A 136-amino-acid chain; its full sequence is ATP synthase epsilon chain (136 aa).

The protein belongs to the ATPase epsilon chain family. F-type ATPases have 2 components, CF(1) - the catalytic core - and CF(0) - the membrane proton channel. CF(1) has five subunits: alpha(3), beta(3), gamma(1), delta(1), epsilon(1). CF(0) has three main subunits: a, b and c.

The protein localises to the cell inner membrane. In terms of biological role, produces ATP from ADP in the presence of a proton gradient across the membrane. The polypeptide is ATP synthase epsilon chain (Hydrogenobaculum sp. (strain Y04AAS1)).